The chain runs to 474 residues: tRNA-2-methylthio-N(6)-dimethylallyladenosine synthase (474 aa).

The MTTase N-terminal domain maps to 3 to 120 (KKLHIKTWGC…LPEMINHVQG (118 aa)). Positions 12, 49, 83, 157, 161, and 164 each coordinate [4Fe-4S] cluster. Residues 143-375 (RAEGPTAFVS…QQRISQQAME (233 aa)) enclose the Radical SAM core domain. In terms of domain architecture, TRAM spans 378-441 (RKMVGTVQRV…ASSLRGILLR (64 aa)).

Belongs to the methylthiotransferase family. MiaB subfamily. In terms of assembly, monomer. [4Fe-4S] cluster serves as cofactor.

Its subcellular location is the cytoplasm. It carries out the reaction N(6)-dimethylallyladenosine(37) in tRNA + (sulfur carrier)-SH + AH2 + 2 S-adenosyl-L-methionine = 2-methylsulfanyl-N(6)-dimethylallyladenosine(37) in tRNA + (sulfur carrier)-H + 5'-deoxyadenosine + L-methionine + A + S-adenosyl-L-homocysteine + 2 H(+). Catalyzes the methylthiolation of N6-(dimethylallyl)adenosine (i(6)A), leading to the formation of 2-methylthio-N6-(dimethylallyl)adenosine (ms(2)i(6)A) at position 37 in tRNAs that read codons beginning with uridine. The polypeptide is tRNA-2-methylthio-N(6)-dimethylallyladenosine synthase (Yersinia pseudotuberculosis serotype O:1b (strain IP 31758)).